The chain runs to 395 residues: LIM/homeobox protein Lhx3 (395 aa).

2 consecutive LIM zinc-binding domains span residues 28 to 78 and 87 to 141; these read CAGC…CKED and CAAC…CKAD. The segment at residues 154 to 213 is a DNA-binding region (homeobox); that stretch reads AKRPRTTITAKQLETLKNAYNNSPKPARHVREQLSSETGLDMRVVQVWFQNRRAKEKRLK. Disordered regions lie at residues 209 to 325 and 348 to 395; these read EKRL…LQAL and GGQG…HAQF. Residues 257–276 are compositionally biased toward polar residues; that stretch reads DEPSMSEMSHSNGIYSNLSE.

Its subcellular location is the nucleus. Functionally, transcription factor. Defines subclasses of motoneurons that segregate into columns in the spinal cord and select distinct axon pathways. Acts in conjunction with LIM-1, ISL-1 and ISL-2. This Gallus gallus (Chicken) protein is LIM/homeobox protein Lhx3 (LHX3).